The primary structure comprises 298 residues: Protein OS-9 homolog (298 aa).

Residues 1–25 (MGLAGGARVVLFVVAAAAAAALTAA) form the signal peptide. N-linked (GlcNAc...) asparagine glycosylation occurs at Asn95. Residues 121–246 (DQCFYRHEGW…TVQSPMLCKN (126 aa)) form the MRH domain. Cysteines 123 and 136 form a disulfide. Trp130, Trp131, and Gln143 together coordinate a mannooligosaccharide derivative. N-linked (GlcNAc...) asparagine glycosylation is found at Asn171 and Asn197. Disulfide bonds link Cys201/Cys232 and Cys216/Cys244. A mannooligosaccharide derivative contacts are provided by Asp202, Arg208, Glu228, and Tyr234.

It belongs to the OS-9 family. In terms of assembly, interacts with HRD3.

The protein resides in the endoplasmic reticulum. Functionally, lectin which functions in endoplasmic reticulum (ER) quality control and ER-associated degradation (ERAD). May bind terminally misfolded non-glycosylated proteins as well as improperly folded glycoproteins, retain them in the ER, and possibly transfer them to the ubiquitination machinery and promote their degradation. The sequence is that of Protein OS-9 homolog from Oryza sativa subsp. japonica (Rice).